A 584-amino-acid chain; its full sequence is MIFAGKAPSNTSTLMKFYSLLLYSLLFSFPFLCHPLPLPSYLHHTINLTHSLLAASNPSLVNNCWLCISLSSSAYTAVPAVQTDWATSPISLHLRTSFNSPHLYPPEELIYFLDRSSKTSPDISHQQAAALLRTYLKNLSPYINSTPPIFGPLTTQTTIPVAAPLCISWQRPTGIPLGNLSPSRCSFTLHLRSPTTNINETIGAFQLHITDKPSINTDKLKNISSNYCLGRHLPCISLHPWLSSPCSSDSPPRPSSCLLIPSPENNSERLLVDTRRFLIHHENRTFPSTQLPHQSPLQPLTAAALAGSLGVWVQDTPFSTPSHLFTLHLQFCLAQGLFFLCGSSTYMCLPANWTGTCTLVFLTPKIQFANGTEELPVPLMTPTQQKRVIPLIPLMVGLGLSASTVALGTGIAGISTSVMTFRSLSNDFSASITDISQTLSVLQAQVDSLAAVVLQNRRGLDLLTAEKGGLCIFLNEECCFYLNQSGLVYDNIKKLKDRAQKLANQASNYAEPPWALSNWMSWVLPIVSPLIPIFLLLLFGPCIFRLVSQFIQNRIQAITNHSIRQMFLLTSPQYHPLPQDLPSA.

An N-terminal signal peptide occupies residues 1 to 35; that stretch reads MIFAGKAPSNTSTLMKFYSLLLYSLLFSFPFLCHP. At 36–523 the chain is on the extracellular side; the sequence is LPLPSYLHHT…WALSNWMSWV (488 aa). Residue Asn-47 is glycosylated (N-linked (GlcNAc...) asparagine). The CXXC motif lies at 64 to 67; it reads CWLC. Asn-199, Asn-222, Asn-265, Asn-283, Asn-352, and Asn-370 each carry an N-linked (GlcNAc...) asparagine glycan. The tract at residues 388 to 408 is fusion peptide; sequence VIPLIPLMVGLGLSASTVALG. Positions 454–470 match the CKS-17 motif; the sequence is LQNRRGLDLLTAEKGGL. Cys-471 and Cys-478 form a disulfide bridge. The short motif at 471–479 is the CX6CC element; it reads CIFLNEECC. The N-linked (GlcNAc...) asparagine glycan is linked to Asn-483. The helical transmembrane segment at 524 to 544 threads the bilayer; that stretch reads LPIVSPLIPIFLLLLFGPCIF. Residues 545–584 are Cytoplasmic-facing; that stretch reads RLVSQFIQNRIQAITNHSIRQMFLLTSPQYHPLPQDLPSA.

It belongs to the gamma type-C retroviral envelope protein family. HERV class-I H env subfamily. As to quaternary structure, the surface (SU) and transmembrane (TM) proteins form a heterodimer. SU and TM are attached by noncovalent interactions or by a labile interchain disulfide bond. In terms of processing, specific enzymatic cleavages in vivo yield the mature SU and TM proteins. Post-translationally, the CXXC motif is highly conserved across a broad range of retroviral envelope proteins. It is thought to participate in the formation of a labile disulfide bond possibly with the CX6CC motif present in the transmembrane protein. Isomerization of the intersubunit disulfide bond to an SU intrachain disulfide bond is thought to occur upon receptor recognition in order to allow membrane fusion. In terms of tissue distribution, low expression in skin and testis. No expression in several cell lines.

It localises to the virion. Its subcellular location is the cell membrane. Functionally, retroviral envelope proteins mediate receptor recognition and membrane fusion during early infection. Endogenous envelope proteins may have kept, lost or modified their original function during evolution. This endogenous envelope protein has lost its original fusogenic properties but has immunosuppressive properties in vivo. Its function is as follows. SU mediates receptor recognition. In terms of biological role, TM anchors the envelope heterodimer to the viral membrane through one transmembrane domain. The other hydrophobic domain, called fusion peptide, mediates fusion of the viral membrane with the target cell membrane. In Homo sapiens (Human), this protein is HERV-H_2q24.3 provirus ancestral Env polyprotein.